We begin with the raw amino-acid sequence, 365 residues long: Hematopoietic SH2 domain-containing protein homolog (365 aa).

Positions 34-125 constitute an SH2 domain; the sequence is WFHGIISRKA…PYNELLTVAC (92 aa). Disordered stretches follow at residues 199–278 and 335–365; these read QSTD…QQKP and AEHP…APGY. Residues 257–277 show a composition bias toward polar residues; sequence QQITPNTPNEGRTQQKNQQQK.

Functionally, may be an adapter protein involved in tyrosine kinase signaling. In Danio rerio (Zebrafish), this protein is Hematopoietic SH2 domain-containing protein homolog (hsh2d).